The following is a 276-amino-acid chain: Glyoxal reductase (276 aa).

Tyr54 functions as the Proton donor in the catalytic mechanism. Position 112 (His112) interacts with substrate. Ser190–Asn242 contacts NADP(+).

It belongs to the aldo/keto reductase family.

The enzyme catalyses (S)-lactaldehyde + NADP(+) = methylglyoxal + NADPH + H(+). In terms of biological role, reduces glyoxal and methylglyoxal (2-oxopropanal). Is not involved in the vitamin B6 biosynthesis. This is Glyoxal reductase (yvgN) from Bacillus subtilis (strain 168).